The sequence spans 229 residues: Meiotically up-regulated gene 31 protein (229 aa).

Disordered stretches follow at residues 16–68 (EDSA…EEDK) and 189–229 (GLPE…TTWA).

It is found in the endoplasmic reticulum. Functionally, has a role in meiosis. This Schizosaccharomyces pombe (strain 972 / ATCC 24843) (Fission yeast) protein is Meiotically up-regulated gene 31 protein (mug31).